A 1157-amino-acid chain; its full sequence is ATP-dependent helicase/deoxyribonuclease subunit B (1157 aa).

The 277-residue stretch at 1–277 (MTLQIIAGKS…KLFLENKRAK (277 aa)) folds into the UvrD-like helicase ATP-binding domain. 8 to 15 (GKSGTGKT) contacts ATP. In terms of domain architecture, UvrD-like helicase C-terminal spans 272 to 578 (ENKRAKSDSL…EFSLLPPSLD (307 aa)). [4Fe-4S] cluster-binding residues include Cys-794, Cys-1115, Cys-1118, and Cys-1124.

Belongs to the helicase family. AddB/RexB type 1 subfamily. In terms of assembly, heterodimer of AddA and AddB. It depends on Mg(2+) as a cofactor. [4Fe-4S] cluster serves as cofactor.

In terms of biological role, the heterodimer acts as both an ATP-dependent DNA helicase and an ATP-dependent, dual-direction single-stranded exonuclease. Recognizes the chi site generating a DNA molecule suitable for the initiation of homologous recombination. The AddB subunit has 5' -&gt; 3' nuclease activity but not helicase activity. This Listeria welshimeri serovar 6b (strain ATCC 35897 / DSM 20650 / CCUG 15529 / CIP 8149 / NCTC 11857 / SLCC 5334 / V8) protein is ATP-dependent helicase/deoxyribonuclease subunit B.